The primary structure comprises 379 residues: Cobalt-precorrin-5B C(1)-methyltransferase (379 aa).

Belongs to the CbiD family.

The enzyme catalyses Co-precorrin-5B + S-adenosyl-L-methionine = Co-precorrin-6A + S-adenosyl-L-homocysteine. It functions in the pathway cofactor biosynthesis; adenosylcobalamin biosynthesis; cob(II)yrinate a,c-diamide from sirohydrochlorin (anaerobic route): step 6/10. Functionally, catalyzes the methylation of C-1 in cobalt-precorrin-5B to form cobalt-precorrin-6A. The protein is Cobalt-precorrin-5B C(1)-methyltransferase of Salmonella paratyphi A (strain ATCC 9150 / SARB42).